Here is a 192-residue protein sequence, read N- to C-terminus: Large ribosomal subunit protein bL9 (192 aa).

The tract at residues 172–192 (DALRPEDFFDPEADGVDEDEA) is disordered. The segment covering 179 to 192 (FFDPEADGVDEDEA) has biased composition (acidic residues).

It belongs to the bacterial ribosomal protein bL9 family.

Its function is as follows. Binds to the 23S rRNA. In Rhizobium johnstonii (strain DSM 114642 / LMG 32736 / 3841) (Rhizobium leguminosarum bv. viciae), this protein is Large ribosomal subunit protein bL9.